The chain runs to 431 residues: MAPIQYIVEGGHRLSGSIEPSGNKNSALPIIAAALLTEHPVTLENVPRIRDTETLVELIRSVGAAAEWTARNTLHIHAKSIRAADLDPELCVRIRASILLAGPLLARCGEVMLPPPGGDVIGRRRLDTHVLALEQLGAKVTATDRLEFRAPKLAGADVFLDEPSVTATENALVAAVAADGVTYLRNAASEPHVQDLANFLVALGAKIEGIGTNTMIIHGPATLGEATYRIQPDHIEVGSLIGLAAVTRSPLRIVRAGVEHLRSIRMGFERLGIVCRVEGDDLIVPSNQTLKIQDDFGGHVPKLEDQPWPAFPADLMSIAIVTATQCEGVILMFEKMFESRMFFVDKLIAMGARIVLCDPHRAIIAGPSRLRGAPMTSPDIRAGMAMLLAAVCAEGTSTINNADQIERGYERIEERLNALGAKIKRVPERKS.

Phosphoenolpyruvate is bound at residue 24 to 25; sequence KN. Position 95 (arginine 95) interacts with UDP-N-acetyl-alpha-D-glucosamine. Aspartate 119 serves as the catalytic Proton donor. The UDP-N-acetyl-alpha-D-glucosamine site is built by aspartate 314 and methionine 336.

This sequence belongs to the EPSP synthase family. MurA subfamily.

The protein resides in the cytoplasm. It carries out the reaction phosphoenolpyruvate + UDP-N-acetyl-alpha-D-glucosamine = UDP-N-acetyl-3-O-(1-carboxyvinyl)-alpha-D-glucosamine + phosphate. Its pathway is cell wall biogenesis; peptidoglycan biosynthesis. In terms of biological role, cell wall formation. Adds enolpyruvyl to UDP-N-acetylglucosamine. The chain is UDP-N-acetylglucosamine 1-carboxyvinyltransferase from Bradyrhizobium diazoefficiens (strain JCM 10833 / BCRC 13528 / IAM 13628 / NBRC 14792 / USDA 110).